The following is a 514-amino-acid chain: MSSKKPVVLVIRDGWGRNPLGPDVAKEYGDATVLADTPFTDYLLANYPHSLLGASGEDVGLPDGQMGNSEVGHLNLGAGRVVFQDLCRVDNAIKDGSMGENAVLKTAFSQAASSRLHLLGLVSDGGVHSHINHLIGIVKYAYEAGVRDICIHAITDGRDCSPTSGVGFIRQLEEAVRPYGAKIATVVGRFYAMDRDKRWDRNKLAWDAIVLGRGEQCSCSPAEYVEQCYAKGETDEFLKPGIFAYGNEQRVRDNDVVFFFNFRADRARQMSDAFLYPEFDGFDREVTPKVHYVTLTEYDAKYPSPIVFEQEQLNNIFGQIVSEAGKTQLRIAETEKYAHVTFFFNGGVETQFPGEDRILVPSPREVATYDLKPQMSAAEVADKFVDAVNKYDVVIMNFANGDMVGHTGFVEAGIAACEAVDSALEKCVKKVLELGGKLLITADHGNAEHMRNEDGSPNTAHTTNLVDLIYVADDKDQVTLSDGILADVAPTLLSLMGLKQPAEMSGHSLVTPGK.

Mn(2+) is bound by residues Asp-13 and Ser-69. The active-site Phosphoserine intermediate is Ser-69. Substrate-binding positions include His-128, 158–159, Arg-189, Arg-195, 263–266, and Lys-336; these read RD and RADR. Residues Asp-402, His-406, Asp-443, His-444, and His-461 each coordinate Mn(2+).

This sequence belongs to the BPG-independent phosphoglycerate mutase family. In terms of assembly, monomer. The cofactor is Mn(2+).

It carries out the reaction (2R)-2-phosphoglycerate = (2R)-3-phosphoglycerate. It participates in carbohydrate degradation; glycolysis; pyruvate from D-glyceraldehyde 3-phosphate: step 3/5. Catalyzes the interconversion of 2-phosphoglycerate and 3-phosphoglycerate. The sequence is that of 2,3-bisphosphoglycerate-independent phosphoglycerate mutase from Akkermansia muciniphila (strain ATCC BAA-835 / DSM 22959 / JCM 33894 / BCRC 81048 / CCUG 64013 / CIP 107961 / Muc).